A 629-amino-acid polypeptide reads, in one-letter code: tRNA uridine 5-carboxymethylaminomethyl modification enzyme MnmG (629 aa).

Residues 13 to 18, Val-125, and Ser-180 contribute to the FAD site; that span reads GGGHAG. 273 to 287 serves as a coordination point for NAD(+); it reads GPRYCPSIEDKVMRF. FAD is bound at residue Gln-370.

It belongs to the MnmG family. In terms of assembly, homodimer. Heterotetramer of two MnmE and two MnmG subunits. FAD is required as a cofactor.

The protein resides in the cytoplasm. NAD-binding protein involved in the addition of a carboxymethylaminomethyl (cmnm) group at the wobble position (U34) of certain tRNAs, forming tRNA-cmnm(5)s(2)U34. This Psychromonas ingrahamii (strain DSM 17664 / CCUG 51855 / 37) protein is tRNA uridine 5-carboxymethylaminomethyl modification enzyme MnmG.